The following is a 129-amino-acid chain: M-zodatoxin-Lt8f (129 aa).

Positions 1 to 20 (MKYFVVALALVAAFACIAES) are cleaved as a signal peptide. A propeptide spanning residues 21–60 (KPAESEHELAEVEEENELADLEDAVWLEHLADLSDLEEAR) is cleaved from the precursor. The Processing quadruplet motif motif lies at 57-60 (EEAR).

Cleavage of the propeptide depends on the processing quadruplet motif (XXXR, with at least one of X being E). In terms of tissue distribution, expressed by the venom gland.

It is found in the secreted. In terms of biological role, insecticidal, cytolytic and antimicrobial peptide. Has insecticidal activity against the flesh fly S.carnaria. Has antibacterial activity against the Gram-negative bacteria E.coli. Forms voltage-dependent, ion-permeable channels in membranes. At high concentration causes cell membrane lysis. The chain is M-zodatoxin-Lt8f (cit 1-7) from Lachesana tarabaevi (Spider).